The following is a 355-amino-acid chain: UDP-N-acetylglucosamine--N-acetylmuramyl-(pentapeptide) pyrophosphoryl-undecaprenol N-acetylglucosamine transferase (355 aa).

UDP-N-acetyl-alpha-D-glucosamine contacts are provided by residues 14–16 (TGG), N126, R162, S190, I245, 264–269 (ALTVCE), and Q289.

It belongs to the glycosyltransferase 28 family. MurG subfamily.

The protein resides in the cell inner membrane. The catalysed reaction is di-trans,octa-cis-undecaprenyl diphospho-N-acetyl-alpha-D-muramoyl-L-alanyl-D-glutamyl-meso-2,6-diaminopimeloyl-D-alanyl-D-alanine + UDP-N-acetyl-alpha-D-glucosamine = di-trans,octa-cis-undecaprenyl diphospho-[N-acetyl-alpha-D-glucosaminyl-(1-&gt;4)]-N-acetyl-alpha-D-muramoyl-L-alanyl-D-glutamyl-meso-2,6-diaminopimeloyl-D-alanyl-D-alanine + UDP + H(+). It participates in cell wall biogenesis; peptidoglycan biosynthesis. Its function is as follows. Cell wall formation. Catalyzes the transfer of a GlcNAc subunit on undecaprenyl-pyrophosphoryl-MurNAc-pentapeptide (lipid intermediate I) to form undecaprenyl-pyrophosphoryl-MurNAc-(pentapeptide)GlcNAc (lipid intermediate II). The polypeptide is UDP-N-acetylglucosamine--N-acetylmuramyl-(pentapeptide) pyrophosphoryl-undecaprenol N-acetylglucosamine transferase (Mannheimia succiniciproducens (strain KCTC 0769BP / MBEL55E)).